The primary structure comprises 177 residues: MSRVAKAPVVVPAGVDVKINGQVITIKGKNGELTRTLNDAVEVKHADNTLTFGPRDGYADGWAQAGTARALLNSMVIGVTEGFTKKLQLVGVGYRAAVKGNVINLSLGFSHPVDHQLPAGITAECPTQTEIVLKGVDKQVIGQVAADLRAYRRPEPYKGKGVRYADEVVRTKEAKKK.

Lys44 carries the N6-acetyllysine modification.

The protein belongs to the universal ribosomal protein uL6 family. In terms of assembly, part of the 50S ribosomal subunit.

Functionally, this protein binds to the 23S rRNA, and is important in its secondary structure. It is located near the subunit interface in the base of the L7/L12 stalk, and near the tRNA binding site of the peptidyltransferase center. This chain is Large ribosomal subunit protein uL6, found in Shigella sonnei (strain Ss046).